The following is a 185-amino-acid chain: Disulfide bond formation protein B (185 aa).

Topologically, residues 1 to 25 are cytoplasmic; it reads MLLFFVILGIFVLTILKAISKQRWS. A helical membrane pass occupies residues 26-42; that stretch reads WLLLAASALSLELSALY. Over 43–60 the chain is Periplasmic; it reads FQHVMQLEPCVMCVYERL. An intrachain disulfide couples C52 to C55. A helical transmembrane segment spans residues 61-76; the sequence is AMLGILLAGLIGASSP. Topologically, residues 77–83 are cytoplasmic; it reads NNVFIRL. A helical transmembrane segment spans residues 84-101; the sequence is SAFLLWGISAVWGILLAI. Residues 102 to 156 are Periplasmic-facing; it reads KHTDYQLHPSPFFTCDFFPNFPAWAPLHEWLPWLFNPTGDCSDIVWQFLGYSMPQ. Residues C116 and C142 are joined by a disulfide bond. Residues 157–175 form a helical membrane-spanning segment; sequence WLIVSFSLYTLLFIIFAIS. At 176 to 185 the chain is on the cytoplasmic side; that stretch reads AVLKTKKQLF.

It belongs to the DsbB family.

It localises to the cell inner membrane. Its function is as follows. Required for disulfide bond formation in some periplasmic proteins. Acts by oxidizing the DsbA protein. The chain is Disulfide bond formation protein B from Psychromonas ingrahamii (strain DSM 17664 / CCUG 51855 / 37).